Reading from the N-terminus, the 357-residue chain is DNA integrity scanning protein DisA (357 aa).

The 139-residue stretch at 8-146 folds into the DAC domain; it reads VKSMINILQL…GNLRYTLKDI (139 aa). ATP contacts are provided by residues Gly-75, Leu-93, and 106 to 110; that span reads MRHRT.

The protein belongs to the DisA family. In terms of assembly, homooctamer. The cofactor is Mg(2+).

The enzyme catalyses 2 ATP = 3',3'-c-di-AMP + 2 diphosphate. Functionally, participates in a DNA-damage check-point that is active prior to asymmetric division when DNA is damaged. DisA forms globular foci that rapidly scan along the chromosomes during sporulation, searching for lesions. When a lesion is present, DisA pauses at the lesion site. This triggers a cellular response that culminates in a temporary block in sporulation initiation. Also has diadenylate cyclase activity, catalyzing the condensation of 2 ATP molecules into cyclic di-AMP (c-di-AMP). c-di-AMP acts as a signaling molecule that couples DNA integrity with progression of sporulation. The rise in c-di-AMP level generated by DisA while scanning the chromosome, operates as a positive signal that advances sporulation; upon encountering a lesion, the DisA focus arrests at the damaged site and halts c-di-AMP synthesis. The polypeptide is DNA integrity scanning protein DisA (Bacillus cereus (strain ATCC 14579 / DSM 31 / CCUG 7414 / JCM 2152 / NBRC 15305 / NCIMB 9373 / NCTC 2599 / NRRL B-3711)).